The chain runs to 242 residues: Pyr4-family terpene cyclase mfmH (242 aa).

Helical transmembrane passes span 25–45, 55–75, 80–100, and 116–136; these read VQDGLIICSGLCWTTAYILYI, GMPLVCLCANIAWEFLFGAAI, AQVVSFFPWFVIDIGIVYTTW, and NLGWILLGGIAGMLVMFWAFL. The N-linked (GlcNAc...) asparagine glycan is linked to Asn-170. 2 helical membrane passes run 175-195 and 211-231; these read SWGIWFTRWIGSVFAELIFVW and VTIFLFIVTEVADLTYPFVYA.

This sequence belongs to the paxB family.

It localises to the membrane. Its pathway is secondary metabolite biosynthesis; terpenoid biosynthesis. Terpene cyclase; part of the gene cluster that mediates the biosynthesis of the phthalide-terpenoid hybrid 11'-O-desmethylfendlerol. Within the pathway, mfmH catalyzes the last step and cyclizes the prenyl unit of 5-O-farnesylcyclopolic acid into a drimane-like structure to yield 11'-O-desmethylfendlerol. The biosynthesis of 11'-O-desmethylfendlerol begins with the NR-PKS mfmB that forms 3,5-dimethylorsellinic acid (DMOA), which is then transformed into the phthalide 5,7-dihydroxy-4-(hydroxymethyl)-6-methylphthalide by the cytochrome P450 monooxygenase mfmA and the hydrolase mfmC. Subsequently, the methyltransferase mfmE catalyzes 7-O-methylation to yield 5-hydroxy-4-(hydroxymethyl)-7-methoxy-6-methylphthalide, which undergoes C-3 hydroxylation by the cytochrome P450 monooxygenase mfmF. The resultant cyclopolic acid (2,5-dihydroxy-4-(hydroxymethyl)-7-methoxy-6-methylphthalide) is then farnesylated by the DMATS-type prenyltransferase mfmD to afford 5-O-farnesylcyclopolic acid. Finally, the Pyr4-family terpene cyclase mfmH cyclizes the farnesyl moiety of 5-O-farnesylcyclopolic acid into a drimane-like structure, thus completing the biosynthesis of 11'-O-desmethylfendlerol. The chain is Pyr4-family terpene cyclase mfmH from Annulohypoxylon moriforme (Filamentous fungus).